The chain runs to 372 residues: MALKFHVIHQSKKSRARVGRIETDHGIIDTPAFVPVATNGALKGVVDHSNIPLMFCNTYHLLVHPGTESIAAMGGLHKFINRDAPIITDSGGFQIFSLAYGSVAEEIKSHGKKKGSSSILEITDEGVWFKSYRDGHKLFLSPEVSVQAQKDLGADIIIPLDELLPFHSDQQYFLSSCSRTYVWEKRSLDYHRNDPRHQSMYGVIHGGIDPEQRKIGCQFVEDHPFDGFAIGGSLGRNLNEMVPVVDITTSHLSKDRPVHLLGIGDLPSIQATVKFGIDSFDSSYPTKAARHGLILSSQGPIKIANQAYANDLSPIDPKCTCLTCSSNLSRAYLRHLFKVHEPNAGIWASIHNLHHMQEVMKNIRKQILNDEI.

Aspartate 89 serves as the catalytic Proton acceptor. Residues 89-93, aspartate 161, and glycine 232 each bind substrate; that span reads DSGGF. The tract at residues 262 to 268 is RNA binding; that stretch reads GIGDLPS. Aspartate 281 (nucleophile) is an active-site residue. The RNA binding; important for wobble base 34 recognition stretch occupies residues 286–290; that stretch reads TKAAR. The Zn(2+) site is built by cysteine 319, cysteine 321, cysteine 324, and histidine 351.

Belongs to the queuine tRNA-ribosyltransferase family. In terms of assembly, homodimer. Within each dimer, one monomer is responsible for RNA recognition and catalysis, while the other monomer binds to the replacement base PreQ1. The cofactor is Zn(2+).

It catalyses the reaction 7-aminomethyl-7-carbaguanine + guanosine(34) in tRNA = 7-aminomethyl-7-carbaguanosine(34) in tRNA + guanine. Its pathway is tRNA modification; tRNA-queuosine biosynthesis. Its function is as follows. Catalyzes the base-exchange of a guanine (G) residue with the queuine precursor 7-aminomethyl-7-deazaguanine (PreQ1) at position 34 (anticodon wobble position) in tRNAs with GU(N) anticodons (tRNA-Asp, -Asn, -His and -Tyr). Catalysis occurs through a double-displacement mechanism. The nucleophile active site attacks the C1' of nucleotide 34 to detach the guanine base from the RNA, forming a covalent enzyme-RNA intermediate. The proton acceptor active site deprotonates the incoming PreQ1, allowing a nucleophilic attack on the C1' of the ribose to form the product. After dissociation, two additional enzymatic reactions on the tRNA convert PreQ1 to queuine (Q), resulting in the hypermodified nucleoside queuosine (7-(((4,5-cis-dihydroxy-2-cyclopenten-1-yl)amino)methyl)-7-deazaguanosine). The protein is Queuine tRNA-ribosyltransferase of Chlamydia felis (strain Fe/C-56) (Chlamydophila felis).